Reading from the N-terminus, the 115-residue chain is C-type natriuretic peptide prohormone (115 aa).

The segment at 24–49 (PSDELNNEAEEMSPAASLPELNADQS) is disordered. A disulfide bond links Cys99 and Cys115.

This sequence belongs to the natriuretic peptide family. As to expression, CNP-115 is differentially processed to produce CNP-38 and CNP-39 in the heart and CNP-22 in the brain.

It is found in the secreted. Hormone which may be vasoactive and natriuretic. Has a cGMP-stimulating activity. This chain is C-type natriuretic peptide prohormone, found in Scyliorhinus canicula (Small-spotted catshark).